The primary structure comprises 400 residues: MTQFASPVLHSLLDTDAYKLHMQQAVFHHYYDVHVAAEFRCRGDDLLGIYADAIREQVQAMQHLRLQDDEYQWLSALPFFKADYLNWLREFRFNPEQVTVSNDNGKLDIRLSGPWREVILWEVPLLAVISEMVHRYRSPQADVAQALDTLENKLVDFSALTAGLDMSRFHLMDFGTRRRFSREVQETIVKRLHQESWFVGTSNYDLARRLSLTPMGTQAHEWFQAHQQISPDLANSQRAALAAWLEEYPDQLGIALTDCITMDAFLRDFGVEFASRYQGLRHDSGDPVEWGEKAIAHYEKLGIDPQSKTLVFSDNLDLRKAVELYRHFSSRVQLSFGIGTRLTCDIPQVKPLNIVIKLVECNGKPVAKLSDSPGKTICHDKAFVRALRKAFDLPHIKKAS.

His220 bears the Phosphohistidine; by autocatalysis mark.

The protein belongs to the NAPRTase family. In terms of processing, transiently phosphorylated on a His residue during the reaction cycle. Phosphorylation strongly increases the affinity for substrates and increases the rate of nicotinate D-ribonucleotide production. Dephosphorylation regenerates the low-affinity form of the enzyme, leading to product release.

It catalyses the reaction nicotinate + 5-phospho-alpha-D-ribose 1-diphosphate + ATP + H2O = nicotinate beta-D-ribonucleotide + ADP + phosphate + diphosphate. Its pathway is cofactor biosynthesis; NAD(+) biosynthesis; nicotinate D-ribonucleotide from nicotinate: step 1/1. Functionally, catalyzes the synthesis of beta-nicotinate D-ribonucleotide from nicotinate and 5-phospho-D-ribose 1-phosphate at the expense of ATP. This Escherichia coli O127:H6 (strain E2348/69 / EPEC) protein is Nicotinate phosphoribosyltransferase.